We begin with the raw amino-acid sequence, 60 residues long: Three-finger toxin Mnn I (60 aa).

Cystine bridges form between Cys3–Cys22, Cys17–Cys39, Cys41–Cys52, and Cys53–Cys58.

Belongs to the three-finger toxin family. Short-chain subfamily. Type I alpha-neurotoxin sub-subfamily. As to expression, expressed by the venom gland.

It is found in the secreted. Functionally, binds to muscle nicotinic acetylcholine receptor (nAChR) and inhibit acetylcholine from binding to the receptor, thereby impairing neuromuscular transmission. The sequence is that of Three-finger toxin Mnn I from Micrurus nigrocinctus (Central American coral snake).